A 146-amino-acid chain; its full sequence is Angiogenin (146 aa).

Residues 1–24 (MVMGLGLFLLVFMLGLGLTSPTLA) form the signal peptide. The residue at position 25 (Gln-25) is a Pyrrolidone carboxylic acid. The active-site Proton acceptor is the His-37. Position 45 (Arg-45) interacts with tRNA. Cystine bridges form between Cys-50–Cys-105, Cys-63–Cys-116, and Cys-81–Cys-131. The short motif at 55–59 (RRQGM) is the Nucleolar localization signal element. Residues Cys-105 and Ile-127 each coordinate tRNA. His-138 (proton donor) is an active-site residue.

This sequence belongs to the pancreatic ribonuclease family. Homodimer. Interacts with RNH1; inhibiting ANG ribonuclease activity. Interacts with PCNA.

Its subcellular location is the secreted. The protein localises to the nucleus. The protein resides in the nucleolus. It localises to the cytoplasm. It is found in the stress granule. With respect to regulation, has weak tRNA ribonuclease activity by itself due to partial autoinhibition by its C-terminus, which folds into a short alpha-helix that partially occludes the substrate-binding site. In absence of stress, the ribonuclease activity is inhibited by RNH1 in the cytoplasm. In response to stress, dissociates from RNH1 in the cytoplasm and associates with cytoplasmic ribosomes with vacant A-sites: ribosomes directly activate the tRNA ribonuclease activity of ANG by refolding the C-terminal alpha-helix. In response to stress, the angiogenic activity of ANG is inhibited by RNH1 in the nucleus. In terms of biological role, secreted ribonuclease that can either promote or restrict cell proliferation of target cells, depending on the context. Endocytosed in target cells via its receptor PLXNB2 and translocates to the cytoplasm or nucleus. Under stress conditions, localizes to the cytoplasm and promotes the assembly of stress granules (SGs): specifically cleaves a subset of tRNAs within anticodon loops to produce tRNA-derived stress-induced fragments (tiRNAs), resulting in translation repression and inhibition of cell proliferation. tiRNas also prevent formation of apoptosome, thereby promoting cell survival. Preferentially cleaves RNAs between a pyrimidine and an adenosine residue, suggesting that it cleaves the anticodon loop of tRNA(Ala) (32-UUAGCAU-38) after positions 33 and 36. Cleaves a subset of tRNAs, including tRNA(Ala), tRNA(Glu), tRNA(Gly), tRNA(Lys), tRNA(Val), tRNA(His), tRNA(Asp) and tRNA(Sec). Under growth conditions and in differentiated cells, translocates to the nucleus and stimulates ribosomal RNA (rRNA) transcription, including that containing the initiation site sequences of 45S rRNA, thereby promoting cell growth and proliferation. Angiogenin induces vascularization of normal and malignant tissues via its ability to promote rRNA transcription. Involved in hematopoietic stem and progenitor cell (HSPC) growth and survival by promoting rRNA transcription in growth conditions and inhibiting translation in response to stress, respectively. Mediates the crosstalk between myeloid and intestinal epithelial cells to protect the intestinal epithelial barrier integrity: secreted by myeloid cells and promotes intestinal epithelial cells proliferation and survival. Also mediates osteoclast-endothelial cell crosstalk in growing bone: produced by osteoclasts and protects the neighboring vascular cells against senescence by promoting rRNA transcription. This is Angiogenin (ANG) from Miopithecus talapoin (Angolan talapoin).